The chain runs to 127 residues: Anti-adapter protein IraD (127 aa).

It belongs to the GpW/Gp25 family. IraD subfamily. As to quaternary structure, interacts with RssB.

The protein resides in the cytoplasm. Functionally, inhibits RpoS proteolysis by regulating RssB activity, thereby increasing the stability of the sigma stress factor RpoS during oxidative stress. Its effect on RpoS stability is due to its interaction with RssB, which probably blocks the interaction of RssB with RpoS, and the consequent delivery of the RssB-RpoS complex to the ClpXP protein degradation pathway. The polypeptide is Anti-adapter protein IraD (Escherichia coli O127:H6 (strain E2348/69 / EPEC)).